We begin with the raw amino-acid sequence, 4499 residues long: MSIFWEVPNAQGEAPCPRSGHSFTVLGERFVLFGGCGRKDGKAAAFNDLYELDTSDPDEYKWKELVVANAPPPRARHAAIALDDKRLLVFGGLNKRIRYNDVWLFNYDDKSWTCMEVEGAAPEPRAHFTATRFGSRVFIFGGYGGSGQVYNEMWVLHFGEDGFRWQNITESIEGTGPAPRFDHSAFIYPVTPNSDTYDKLLIMGGRDLSQMYQDSHMLDLNKMAWENETQPPTLPYEICNNVCDGIESVPYHKVFSFGGRKGMMQYLNTVEVMDCGTQMWSTPPVDHGVAPVGREDTAWVFDVKTCSLLIFGGWANRWLGDLHKLNVSPIIGPPYACTAIQPEMGPVFGSTELVIRGLRFRDGKVQVKFGLSEKNEVVVEGTYVDQETIRVQTPNYEQFGALTVDVRVSINGEGWTVNKIKYAYFANTAARNCIAYGPGLLAETISGVEVPFIIQAKDTLNDKRTSGGDVFKVTVVSADGKNEGVSRVRDLQNGQYEVQYAAPTAGPYLIHVAFNELGTSDFVPIRGSPFTVKCTDSWTKHRVMGAAPAKRKGATICTMGNELVLYGGDKSGVTVLNTEGAEWRWSPATVSGSTPPDRTAHSTVVLSDGELVVFGGINLADQNDLNDIYYLRKQGEGWVWSCPSESRPYIRHPKGAAAVSAEPSAEPAAEPAAEPAAEPDADAPAAEPAAEGEEGAVPAEGEEGAEGATGSRPVSAKPAPAAAAPAAEALPELPVSARNSHVAVAIDKDLYVMMGDHDGDLMTELAMVDTSDRTCAHWLEPILKGDVPVPRKACAAAATGNTIVLFGGQTQNADGEATVTGDLVIMEVTGPNSIQCAVNPAAPGASGSPAARYGAVMQEFSNGKLFLHGGMDAASKPLNDGWLFDVPSKTWQCVYVGSSDVVLPTGQLATLSGNRIVLVSAAVGSPKLDSVQSLDFQELRDQAGVHAKMRASTETLLKGLEDWVDTQAHGMELARSPEKLSKDFENGLRKVMDALFQVKSQRSQTDLLIDQLHEAFAQLAEEKVPGINKMEKRLEAAAHKWDEIKKAQPQVKTDVEPIQAAKGEDIKKEIETFAAKVRNYRADFRRRGFFKYATGFDGAYPLLDAAAHELAELKKECDRLSELASVFEFPQAIEPVTVAIKETVEDLVMVKDVWDTAVLCELQFQDWRQTLWSDIRTDIMEEGAKQFVKEVKSLHKKVRDEDVFRGVDQVVKNFLVSVPLVADLRSPAMRDRHWEQLMATTKMTFNVKDPNFKLDDLLALELHKFEEEVGEIVDRAQKEEKMEIAIRKLNDTWTRVEFQFHRHKDYDVHTVKMAEEDFEALEDNQVQVQGMIANRYMATFKDEILGWQKKLNDVADVNQIMAEIQRTWAYLESLFIHSEEVKKELPQATERFAAIDTEVKKVLREFQQLKNCVSCCNREGLYANLETQERELEICKKALNDYMESKRRAFPRFYFVSSADLLDILSNGNNPMRVQIHMNKCFQAIDNVRLDSEEVVPGRRPKALGMESCVGIEYVPFSSLPLENKVEQYMNDIIAKMRNDVRMVLKASVEDYPSKPRDKWLFDWPSQIILVVNQIYWCLEVEQAFTEMARGDKGAMSKYNEFQVKQLTKLIEVTRTDLSKPDRQKIMNMITIDAHSRDMVLAGADQPDSFQWVSQLRSYWDRDISDCRIRICDASFPYGYEYLGNGPRLVITPLTDRIYITATQACWLSLGTAPAGPAGTGKTETTKDLSAQLGKSVYVFNCSPEMDYRTMGDIFKGLAASGSWGCFDEFNRLVPEVLSVCSVQYKCVTDSQKKKTMLPGRGLEYIKDGVKHPAVEHWSFIAADGVEMPLEEGTSAFITMNPGYIGRAELPESLKALFRPITVMVPDRQLIMENMLMAEGFVEAKMLAKKFASLYYLLEDLLSPQKHYDWGLRAIKSVLVVAGSLLRAEAGQVEADVLFRALRDFNIPKILAQDMVIFMGLLNDLFPGIDPPRKRDMEFEDVIVSTIKDLGLTPEDDFVLRVVQFSELLAIRHCVFLMGPTGTGRTECYRVLAKAITKGCNNPVNDYLKMTNKKKVVIRDINPKSISTYELYGQVNQATREWKDGLLSYYMRDVANMPGDDPKWLLLDGDLDANWIESMNSVMDDNRLLTLPSNERIRVLPHMKLIFEIRDLKFATPATATRAGILYISEGQQWHNMAMSWINRVVKPYAERAKWKDPQLPCTWLREMFDKYIPPTLLEMKKSYSHITPLAQMNFISTLVNIMEGVLKPENLSNKADQAMFEMYFVFAMIWAFGGGLVEKDGIPYRRNFDKWFKQTWTTVKIPGKGTVYDYFVNPKTQKFQPWAELVTDIDYDGSRPMSTVFVPTAETSSLRFFLDMMVDLRKPIMFVGGAGVGKTQLVKGKLGSLNEEQISLSISFNYFTDVVSFQKVLESPLEKQPAGINYGPPGTKQLIYFVDDLNMPKLDLYETAMPISLIRQHLGWGHWFDRAKLTPKNINNTQYVACMNPTAGSFIINPRLQRLFMTLAVDFPGQDSLMKIYGTFLQGHLKKFSESIQDMGTKILQAALALHDRVSQTFRKTAINFHYEFTVRHLANVFQGLLMSTPEAFNSPTKWGKLWLHESERVYADRLVSLYDLDAYNKAATAIAKKYFSVADIDDYYKKKDPKPLIFCHFARGLADKAYDEVADYTSLYKTLTEALNEYNETNAAMDLVLFEDAMKHVCRISRIVSNPSGHALLVGVGGSGKQSLARLAAHICGYATQMIVISGSYSMNNFKEDIQKMYKRTGVKGEGVMFLFTDSQIVDERMLVYINDLLSSGEIPDLFPQEDRDEIVNALRSETKSLGLLDTAENCWATFIQKVKTNLHMVFTASPVGENFRVRSQRFLATVTSTVIDWFQPWPESSLFSVAKRFLDEVDLGEDAVANAVVEFMPYSFQLVNKVSIKFREQERRYNYTTPKTFLELIKLYKNVLAAKRKANQDNTERLENGLHKLHKVQADVDILVEEAKVKAVEVEHKVASANIFAEQVGVEKEKVNAENAAAQVEAEKCAVIAKEVSEKQASCEKDLAAAEPLVAEAMAALETVTKKDLGEAKSLKKPPPGVDDITAVVIILLENNPKDKSWQAAQKLMNNVDKFLERVKSFKSVIDAGQVARKTVDACRPYLALEWFNREAIGKKSAAAAGLCEWAVNIIKYYDVVQEVEPKRQELAAANAKLEEANVTLAAVEEKVALLNAKVQELEQQYKEANDDKEAAIRESERCQRKLELANRLINALASEGERWALTVEQLRKSYEVLTGDMLLAAAFVSYAGPFTAKFRAHVIDDWILFLRERHMPMTEGITDPLKVLVDDALVAGWIREGLPSDPTSVQNGTILTNSERWSLMMDPQLQGILWIKERESKNNLQVTRMGASNMLQVMERAIEAGHSVLVENMGETIDAVLNPIITRSTFKKGRSLYVKLGDKECEYNKNFRLFLHTKLSNPHYPPEIQAETTLINFTVTEAGLEDQLLALVVNKERPDLEETKTQLIIQNTEFTIKLKELEDGLLLKLSTAEGDITEDVALIESLEDAKRVSTEISEKVKESRETEAAINENRNKYRTVAARGAMLFFLLNSLNKIHAFYQFSLNAFVTVFSRGLDLAPGGRKKGKGLKKTPSLRDQPMDHQSLMEKARRSSGVGDRRPSQEGLPGPEASQASLAESQGGRGSQVGDAEDEDDESFAMAPEALEQRLVNLLETCTFTVYNYTRRGLFDRDKLIVLSLLTFTILLRSQAVDASEYEALCRGMRNPTPPPITDDLSRWMAESQWAALDVLTTLPCFAHLAKDMEKNSDDWFNWCNNEAAERAPMPGEWGKLTEFRQLLIIRALRPDRITNALQNFCEHMMGSDYVNQDAFSPAAMMDESSSATPIFFILFPGYSPSKEIEVYANKCGYSVANGRLCLISMGQGQEAPAEAVLDKYTREGGWVFLDNVHLMQGWIPKLERKLEIAAESAHPDFRCFFSAEPINGAPHANIIPESILQTCIKISNEPPSDMKSNMRRAFAAFTPEQCDRPSTPAKRVAFRAILFGLCFYHSLLLGRKKFGVGIGTGSGSGLGFCRGYSFNIGDLTTCGDVLYNYLEAYEQIPWRDLQYMFGEVFYGGHITDSMDRRCCTTYLEVLIRNEILPKGNPDEVEAWEAPTLELAPGFFAPKPVDYPTLKEYIETSLPAESPVVYGMHPNAELSLLTSLGETLFKTVVEVAGGGGGGGGGGGGGENAVRQALETFKERLPEPFNMVEVELRVKEKTPFVVVALQEATRMNALLSEMKRSMEELQLGLDGALNMSDNMEKLAKGIASNTVPELWMSCMSTRVQEVYTLTAWYQDVVKRHDQLSAWTAGDIITPHSVWLPGLFNPKAFLTAVMQTFARANKLPLDVMKFMTEVTRMTSPEQVTEAAPLGVYVHGLVLEGARWDREDGCLRDSKPNELHPAMPVLQVKPVTADQFNLEGYYECPVYTNMQRANVYSPVVSTFTLRTQDMPAKWVLASVALLLQDDLAG.

The interval 1 to 1677 (MSIFWEVPNA…RIRICDASFP (1677 aa)) is stem. Kelch repeat units lie at residues 29 to 84 (RFVL…ALDD), 86 to 135 (RLLV…RFGS), 137 to 183 (VFIF…RFDH), 199 to 245 (KLLI…VCDG), 253 to 304 (KVFS…FDVK), and 307 to 358 (SLLI…IRGL). One copy of the Filamin repeat lies at 425–534 (FANTAARNCI…IRGSPFTVKC (110 aa)). 2 Kelch repeats span residues 562–608 (ELVL…VLSD) and 610–661 (ELVV…AVSA). The interval 653–720 (PKGAAAVSAE…SRPVSAKPAP (68 aa)) is disordered. Residues 655–689 (GAAAVSAEPSAEPAAEPAAEPAAEPDADAPAAEPA) show a composition bias toward low complexity. Residues 690–705 (AEGEEGAVPAEGEEGA) show a composition bias toward acidic residues. Kelch repeat units lie at residues 750–801 (LYVM…ATGN) and 864–913 (KLFL…TLSG). 2 coiled-coil regions span residues 1261 to 1334 (ELHK…MIAN) and 1382 to 1450 (KKEL…RRAF). AAA regions lie at residues 1678 to 1921 (YGYE…VLVV) and 1981 to 2225 (DVIV…KSYS). ATP-binding positions include 1716 to 1723 (GPAGTGKT) and 2019 to 2026 (GPTGTGRT). The Kelch 11 repeat unit spans residues 2269–2317 (MIWAFGGGLVEKDGIPYRRNFDKWFKQTWTTVKIPGKGTVYDYFVNPKT). AAA regions lie at residues 2331-2577 (DYDG…VFQG) and 2679-2928 (EYNE…ERRY). An ATP-binding site is contributed by 2369–2376 (GGAGVGKT). Residues 2655 to 2688 (LADKAYDEVADYTSLYKTLTEALNEYNETNAAMD) are a coiled coil. 2717–2724 (GVGGSGKQ) is a binding site for ATP. Residues 3003 to 3023 (VGVEKEKVNAENAAAQVEAEK) are a coiled coil. The stalk stretch occupies residues 3003-3262 (VGVEKEKVNA…ERWALTVEQL (260 aa)). Residues 3070-3117 (LKKPPPGVDDITAVVIILLENNPKDKSWQAAQKLMNNVDKFLERVKSF) form a Kelch 12 repeat. Coiled-coil stretches lie at residues 3170–3262 (DVVQ…VEQL) and 3486–3515 (NKERPDLEETKTQLIIQNTEFTIKLKELED). An AAA 5 region spans residues 3320 to 3550 (LVDDALVAGW…AKRVSTEISE (231 aa)). Residues 3614–3687 (GRKKGKGLKK…VGDAEDEDDE (74 aa)) form a disordered region. A compositionally biased stretch (basic and acidic residues) spans 3630-3653 (QPMDHQSLMEKARRSSGVGDRRPS). The tract at residues 3843 to 4082 (LQNFCEHMMG…LTTCGDVLYN (240 aa)) is AAA 6.

This sequence belongs to the dynein heavy chain family. In terms of assembly, consists of at least 3 heavy chains (alpha, beta and gamma), 2 intermediate chains and 8 light chains.

The protein resides in the cell projection. It is found in the cilium. Its subcellular location is the flagellum. The protein localises to the cytoplasm. It localises to the cytoskeleton. The protein resides in the flagellum axoneme. Force generating protein of eukaryotic cilia and flagella. Produces force towards the minus ends of microtubules. Dynein has ATPase activity; the force-producing power stroke is thought to occur on release of ADP. The protein is Dynein alpha chain, flagellar outer arm (ODA11) of Chlamydomonas reinhardtii (Chlamydomonas smithii).